The primary structure comprises 410 residues: LL-diaminopimelate aminotransferase (410 aa).

Substrate-binding residues include tyrosine 15 and glycine 42. Pyridoxal 5'-phosphate-binding positions include tyrosine 72, 108–109, tyrosine 132, asparagine 187, tyrosine 218, and 246–248; these read SK and SFS. Substrate contacts are provided by lysine 109, tyrosine 132, and asparagine 187. Position 249 is an N6-(pyridoxal phosphate)lysine (lysine 249). Pyridoxal 5'-phosphate-binding residues include arginine 257 and asparagine 292. Asparagine 292 and arginine 388 together coordinate substrate.

Belongs to the class-I pyridoxal-phosphate-dependent aminotransferase family. LL-diaminopimelate aminotransferase subfamily. Homodimer. The cofactor is pyridoxal 5'-phosphate.

The catalysed reaction is (2S,6S)-2,6-diaminopimelate + 2-oxoglutarate = (S)-2,3,4,5-tetrahydrodipicolinate + L-glutamate + H2O + H(+). Its pathway is amino-acid biosynthesis; L-lysine biosynthesis via DAP pathway; LL-2,6-diaminopimelate from (S)-tetrahydrodipicolinate (aminotransferase route): step 1/1. In terms of biological role, involved in the synthesis of meso-diaminopimelate (m-DAP or DL-DAP), required for both lysine and peptidoglycan biosynthesis. Catalyzes the direct conversion of tetrahydrodipicolinate to LL-diaminopimelate. This is LL-diaminopimelate aminotransferase from Syntrophotalea carbinolica (strain DSM 2380 / NBRC 103641 / GraBd1) (Pelobacter carbinolicus).